Reading from the N-terminus, the 143-residue chain is Large ribosomal subunit protein uL11 (143 aa).

Belongs to the universal ribosomal protein uL11 family. As to quaternary structure, part of the ribosomal stalk of the 50S ribosomal subunit. Interacts with L10 and the large rRNA to form the base of the stalk. L10 forms an elongated spine to which L12 dimers bind in a sequential fashion forming a multimeric L10(L12)X complex. One or more lysine residues are methylated.

Its function is as follows. Forms part of the ribosomal stalk which helps the ribosome interact with GTP-bound translation factors. In Clavibacter sepedonicus (Clavibacter michiganensis subsp. sepedonicus), this protein is Large ribosomal subunit protein uL11.